The sequence spans 495 residues: Glucose-6-phosphate 1-dehydrogenase (495 aa).

An Isoglutamyl lysine isopeptide (Lys-Gln) (interchain with Q-Cter in protein Pup) cross-link involves residue Lys51. NADP(+)-binding positions include Asp94–Leu95 and Lys154. 4 residues coordinate substrate: His184, Lys188, Glu222, and Asp241. His246 serves as the catalytic Proton acceptor. Substrate is bound at residue Lys345.

The protein belongs to the glucose-6-phosphate dehydrogenase family.

The enzyme catalyses D-glucose 6-phosphate + NADP(+) = 6-phospho-D-glucono-1,5-lactone + NADPH + H(+). It functions in the pathway carbohydrate degradation; pentose phosphate pathway; D-ribulose 5-phosphate from D-glucose 6-phosphate (oxidative stage): step 1/3. Its function is as follows. Catalyzes the oxidation of glucose 6-phosphate to 6-phosphogluconolactone. In Mycolicibacterium smegmatis (strain ATCC 700084 / mc(2)155) (Mycobacterium smegmatis), this protein is Glucose-6-phosphate 1-dehydrogenase.